Consider the following 71-residue polypeptide: UPF0352 protein Asuc_0778 (71 aa).

The protein belongs to the UPF0352 family.

The protein is UPF0352 protein Asuc_0778 of Actinobacillus succinogenes (strain ATCC 55618 / DSM 22257 / CCUG 43843 / 130Z).